We begin with the raw amino-acid sequence, 358 residues long: Peptide chain release factor 1 (358 aa).

An N5-methylglutamine modification is found at Gln-237.

The protein belongs to the prokaryotic/mitochondrial release factor family. Methylated by PrmC. Methylation increases the termination efficiency of RF1.

Its subcellular location is the cytoplasm. Peptide chain release factor 1 directs the termination of translation in response to the peptide chain termination codons UAG and UAA. The chain is Peptide chain release factor 1 from Mycoplasma mobile (strain ATCC 43663 / 163K / NCTC 11711) (Mesomycoplasma mobile).